The primary structure comprises 1112 residues: MGFESSSSAASNMKPQPQKSNTAQYSVDAALFADFAQSIYTGKSFNYSKSVISPPNHVPDEHITAYLSNIQRGGLVQPFGCLIAVEEPSFRILGLSDNSSDFLGLLSLPSTSHSGEFDKVKGLIGIDARTLFTPSSGASLSKAASFTEISLLNPVLVHSRTTQKPFYAILHRIDAGIVMDLEPAKSGDPALTLAGAVQSQKLAVRAISRLQSLPGGDIGALCDTVVEDVQRLTGYDRVMVYQFHEDDHGEVVSEIRRSDLEPYLGLHYPATDIPQAARFLFKQNRVRMICDCNATPVKVVQSEELKRPLCLVNSTLRAPHGCHTQYMANMGSVASLALAIVVKGKDSSKLWGLVVGHHCSPRYVPFPLRYACEFLMQAFGLQLQMELQLASQLAEKKAMRTQTLLCDMLLRDTVSAIVTQSPGIMDLVKCDGAALYYKGKCWLVGVTPNESQVKDLVNWLVENHGDDSTGLTTDSLVDAGYPGAISLGDAVCGVAAAGFSSKDYLLWFRSNTASAIKWGGAKHHPKDKDDAGRMHPRSSFTAFLEVAKSRSLPWEISEIDAIHSLRLIMRESFTSSRPVLSGNGVARDANELTSFVCEMVRVIETATAPIFGVDSSGCINGWNKKTAEMTGLLASEAMGKSLADEIVQEESRAALESLLCKALQGEEEKSVMLKLRKFGQNNHPDYSSDVCVLVNSCTSRDYTENIIGVCFVGQDITSEKAITDRFIRLQGDYKTIVQSLNPLIPPIFASDENACCSEWNAAMEKLTGWSKHEVIGKMLPGEVFGVFCKVKCQDSLTKFLISLYQGIAGDNVPESSLVEFFNKEGKYIEASLTANKSTNIEGKVIRCFFFLQIINKESGLSCPELKESAQSLNELTYVRQEIKNPLNGIRFAHKLLESSEISASQRQFLETSDACEKQITTIIESTDLKSIEEGKLQLETEEFRLENILDTIISQVMIILRERNSQLRVEVAEEIKTLPLNGDRVKLQLILADLLRNIVNHAPFPNSWVGISISPGQELSRDNGRYIHLQFRMIHPGKGLPSEMLSDMFETRDGWVTPDGLGLKLSRKLLEQMNGRVSYVREDERCFFQVDLQVKTMLGVESRGTEGSSSIK.

The disordered stretch occupies residues M1–S20. The GAF domain occupies D217–L387. C322 is a phytochromobilin binding site. PAS domains are found at residues F595–E666 and D732–L803. The Histidine kinase domain occupies Y877–T1096.

Belongs to the phytochrome family. As to quaternary structure, homodimer. Post-translationally, contains one covalently linked phytochromobilin chromophore.

In terms of biological role, regulatory photoreceptor which exists in two forms that are reversibly interconvertible by light: the Pr form that absorbs maximally in the red region of the spectrum and the Pfr form that absorbs maximally in the far-red region. Photoconversion of Pr to Pfr induces an array of morphogenic responses, whereas reconversion of Pfr to Pr cancels the induction of those responses. Pfr controls the expression of a number of nuclear genes including those encoding the small subunit of ribulose-bisphosphate carboxylase, chlorophyll A/B binding protein, protochlorophyllide reductase, rRNA, etc. It also controls the expression of its own gene(s) in a negative feedback fashion. The polypeptide is Phytochrome E (PHYE) (Arabidopsis thaliana (Mouse-ear cress)).